The sequence spans 257 residues: Photosystem I chlorophyll a/b-binding protein 2, chloroplastic (257 aa).

The transit peptide at 1 to 43 (MASSLCASSAIAAISSPSFLGGKKLRLKKKLTVPAVSRPDASV) directs the protein to the chloroplast. Trp-55 is a binding site for chlorophyll b. Chlorophyll a-binding residues include Phe-75, Ser-81, and Glu-94. A chlorophyll b-binding site is contributed by Arg-99. 2 consecutive transmembrane segments (helical) span residues 100 to 120 (WAML…IGIL) and 133 to 153 (YFTD…WAEG). Positions 152 and 155 each coordinate chlorophyll b. The chlorophyll a site is built by Lys-208, Glu-209, Asn-212, Arg-214, Gln-226, and His-241. A helical membrane pass occupies residues 215 to 235 (LAMLAVMGAWFQHIYTGTGPI).

Belongs to the light-harvesting chlorophyll a/b-binding (LHC) protein family. In terms of assembly, the LHC complex consists of chlorophyll a-b binding proteins. Red-emitting heterodimers with LHCA3 and LHCA5. Binds to carotenoids. It depends on Binds at least 14 chlorophylls (8 Chl-a and 6 Chl-b) and carotenoids such as lutein and neoxanthin. as a cofactor. Photoregulated by reversible phosphorylation of its threonine residues.

The protein resides in the plastid. The protein localises to the chloroplast thylakoid membrane. The light-harvesting complex (LHC) functions as a light receptor, it captures and delivers excitation energy to photosystems with which it is closely associated, here photosystem I. The sequence is that of Photosystem I chlorophyll a/b-binding protein 2, chloroplastic from Arabidopsis thaliana (Mouse-ear cress).